The primary structure comprises 105 residues: Extracellular guanyl-specific ribonuclease Fl1 (105 aa).

Intrachain disulfides connect Cys-5-Cys-101 and Cys-23-Cys-82. His-39 is an active-site residue. Residue Glu-57 is the Proton acceptor of the active site. His-90 (proton donor) is an active-site residue.

The protein belongs to the ribonuclease N1/T1 family.

The enzyme catalyses [RNA] containing guanosine + H2O = an [RNA fragment]-3'-guanosine-3'-phosphate + a 5'-hydroxy-ribonucleotide-3'-[RNA fragment].. In Gibberella baccata (Fusarium lateritium), this protein is Extracellular guanyl-specific ribonuclease Fl1.